Here is a 460-residue protein sequence, read N- to C-terminus: Cation efflux system protein CusC (460 aa).

The N-terminal stretch at 1 to 17 (MSPCKLLPFCVALALTG) is a signal peptide. Residue Cys-18 is the site of N-palmitoyl cysteine attachment. The S-diacylglycerol cysteine moiety is linked to residue Cys-18.

The protein belongs to the outer membrane factor (OMF) (TC 1.B.17) family. As to quaternary structure, homotrimer. Component of the cus efflux system composed of CusA, CusB, CusC and CusF.

It is found in the cell outer membrane. In terms of biological role, forms pores that allow passive diffusion of cations across the outer membrane. Part of a cation efflux system that mediates resistance to copper and silver. The chain is Cation efflux system protein CusC (cusC) from Escherichia coli O6:H1 (strain CFT073 / ATCC 700928 / UPEC).